We begin with the raw amino-acid sequence, 448 residues long: MHFIAISINHRTADVALREQVAFRDDALRIAHEDLYETKSILENVILSTCNRTEVYAVVDQIHTGRYYIQRFLARAFGFEVDDIKAMSEVKVGDEAVEHLLRVTSGLDSIVLGETQILGQIRDAFFLAQSTGTTGTIFNHLFKQAITFAKRAHNETDIADNAVSVSYAAVELAKKVFGKLKSKQAIIIGAGEMSELSLLNLLGSGITDITVVNRTIENAMKLAAKHQVKYDELSSLPNLLESADIVISSTSAQSYIITNEMIERIAENRKQDSLVLIDIAVPRDIEPGISAITNIFNYDVDDLKGLVDANLRERQLAAATISEQIPAEIHAHNEWISMLGVVPVIRALREKAMAIQAETMDSIDRKLPGLSERERKIISKHTKSIINQMLKDPIKQAKELSSDKKSNEKLELFQNIFDIEAECPHEQAKQQKESKVKEISARRIFSFE.

Residues 49–52 (TCNR), Ser109, 114–116 (ETQ), and Gln120 each bind substrate. Catalysis depends on Cys50, which acts as the Nucleophile. 189–194 (GAGEMS) lines the NADP(+) pocket.

The protein belongs to the glutamyl-tRNA reductase family. Homodimer.

It carries out the reaction (S)-4-amino-5-oxopentanoate + tRNA(Glu) + NADP(+) = L-glutamyl-tRNA(Glu) + NADPH + H(+). The protein operates within porphyrin-containing compound metabolism; protoporphyrin-IX biosynthesis; 5-aminolevulinate from L-glutamyl-tRNA(Glu): step 1/2. In terms of biological role, catalyzes the NADPH-dependent reduction of glutamyl-tRNA(Glu) to glutamate 1-semialdehyde (GSA). This Staphylococcus aureus (strain Mu3 / ATCC 700698) protein is Glutamyl-tRNA reductase.